A 433-amino-acid polypeptide reads, in one-letter code: MLSVIILAAGKGTRMRSSLPKTLHTICGEPMLFYILETAFSISDDVHLILHHQQERIKEAVLERFKGVIFHTQIVEKYSGTGGAIMQKDKTPISTKHERVLILNADMPLITKDALAPLLESKNNAIGLLHLADPKGYGRVVLENHQVKKIVEEKDANDEEKEIKSVNAGVYGFERDFLEKYLPKLHDQNAQKEYYLTDLIALGINENETIDAIFLKEECFLGVNSQTERAKAEEIMLERLRKNAMDLGVVMQLPNSIYLEKGVSFKGECVLEQGVRLIGNCLIENAHIKAYSVIEESQIVNSSVGPFAHARPKSVICNSHVGNFVETKNAKLQGTKAGHLSYLGDCEIGKNTNVGAGVITCNYDGKKKHQTIIGENVFIGSDSQLVAPINIGSNVLIGSGTTITKDIPSGSLSLSRAPQTNIENGYFKFFKKP.

Residues 1–226 (MLSVIILAAG…EECFLGVNSQ (226 aa)) form a pyrophosphorylase region. Residues 7 to 10 (LAAG), Lys-21, and 80 to 81 (GT) contribute to the UDP-N-acetyl-alpha-D-glucosamine site. Asp-106 is a Mg(2+) binding site. Residues Gly-138, Glu-152, Asn-167, and Asn-224 each contribute to the UDP-N-acetyl-alpha-D-glucosamine site. Asn-224 contributes to the Mg(2+) binding site. The interval 227-247 (TERAKAEEIMLERLRKNAMDL) is linker. The segment at 248–433 (GVVMQLPNSI…NGYFKFFKKP (186 aa)) is N-acetyltransferase. The UDP-N-acetyl-alpha-D-glucosamine site is built by Arg-311 and Lys-328. Catalysis depends on His-339, which acts as the Proton acceptor. 2 residues coordinate UDP-N-acetyl-alpha-D-glucosamine: Tyr-342 and Asn-353. Acetyl-CoA is bound by residues Ala-356, 362-363 (NY), Ser-381, Ser-399, and Arg-416.

This sequence in the N-terminal section; belongs to the N-acetylglucosamine-1-phosphate uridyltransferase family. The protein in the C-terminal section; belongs to the transferase hexapeptide repeat family. Homotrimer. Mg(2+) is required as a cofactor.

It is found in the cytoplasm. The catalysed reaction is alpha-D-glucosamine 1-phosphate + acetyl-CoA = N-acetyl-alpha-D-glucosamine 1-phosphate + CoA + H(+). It catalyses the reaction N-acetyl-alpha-D-glucosamine 1-phosphate + UTP + H(+) = UDP-N-acetyl-alpha-D-glucosamine + diphosphate. It functions in the pathway nucleotide-sugar biosynthesis; UDP-N-acetyl-alpha-D-glucosamine biosynthesis; N-acetyl-alpha-D-glucosamine 1-phosphate from alpha-D-glucosamine 6-phosphate (route II): step 2/2. The protein operates within nucleotide-sugar biosynthesis; UDP-N-acetyl-alpha-D-glucosamine biosynthesis; UDP-N-acetyl-alpha-D-glucosamine from N-acetyl-alpha-D-glucosamine 1-phosphate: step 1/1. It participates in bacterial outer membrane biogenesis; LPS lipid A biosynthesis. Its function is as follows. Catalyzes the last two sequential reactions in the de novo biosynthetic pathway for UDP-N-acetylglucosamine (UDP-GlcNAc). The C-terminal domain catalyzes the transfer of acetyl group from acetyl coenzyme A to glucosamine-1-phosphate (GlcN-1-P) to produce N-acetylglucosamine-1-phosphate (GlcNAc-1-P), which is converted into UDP-GlcNAc by the transfer of uridine 5-monophosphate (from uridine 5-triphosphate), a reaction catalyzed by the N-terminal domain. This chain is Bifunctional protein GlmU, found in Helicobacter pylori (strain ATCC 700392 / 26695) (Campylobacter pylori).